The following is a 374-amino-acid chain: Chaperone protein DnaJ (374 aa).

One can recognise a J domain in the interval 5 to 70 (CYYEILNVSK…SKRSRYDQFG (66 aa)). The CR-type zinc finger occupies 130 to 207 (GVEKEITIPR…CYGNGKVKKQ (78 aa)). Cys-143, Cys-146, Cys-159, Cys-162, Cys-181, Cys-184, Cys-195, and Cys-198 together coordinate Zn(2+). CXXCXGXG motif repeat units follow at residues 143–150 (CDSCDGTG), 159–166 (CHACHGQG), 181–188 (CPVCNGTG), and 195–202 (CDACYGNG).

The protein belongs to the DnaJ family. As to quaternary structure, homodimer. The cofactor is Zn(2+).

It is found in the cytoplasm. Participates actively in the response to hyperosmotic and heat shock by preventing the aggregation of stress-denatured proteins and by disaggregating proteins, also in an autonomous, DnaK-independent fashion. Unfolded proteins bind initially to DnaJ; upon interaction with the DnaJ-bound protein, DnaK hydrolyzes its bound ATP, resulting in the formation of a stable complex. GrpE releases ADP from DnaK; ATP binding to DnaK triggers the release of the substrate protein, thus completing the reaction cycle. Several rounds of ATP-dependent interactions between DnaJ, DnaK and GrpE are required for fully efficient folding. Also involved, together with DnaK and GrpE, in the DNA replication of plasmids through activation of initiation proteins. The polypeptide is Chaperone protein DnaJ (Francisella tularensis subsp. tularensis (strain FSC 198)).